Consider the following 253-residue polypeptide: NAD-dependent protein deacylase 2 (253 aa).

The Deacetylase sirtuin-type domain maps to 1–252 (MEDEIRKAAE…VEEVKRLRSE (252 aa)). Residues 23–42 (GAGI…DGLW) and 100–103 (QNID) each bind NAD(+). Catalysis depends on His-118, which acts as the Proton acceptor. The Zn(2+) site is built by Cys-126, Cys-129, Cys-150, and Cys-153. Residues 191-193 (GSS), 217-219 (NAE), and Ala-235 contribute to the NAD(+) site.

This sequence belongs to the sirtuin family. Class III subfamily. It depends on Zn(2+) as a cofactor.

Its subcellular location is the cytoplasm. The enzyme catalyses N(6)-acetyl-L-lysyl-[protein] + NAD(+) + H2O = 2''-O-acetyl-ADP-D-ribose + nicotinamide + L-lysyl-[protein]. Its function is as follows. NAD-dependent protein deacetylase which modulates the activities of several proteins which are inactive in their acetylated form. Deacetylates the N-terminal lysine residue of Alba, the major archaeal chromatin protein and that, in turn, increases Alba's DNA binding affinity, thereby repressing transcription. This is NAD-dependent protein deacylase 2 from Archaeoglobus fulgidus (strain ATCC 49558 / DSM 4304 / JCM 9628 / NBRC 100126 / VC-16).